A 946-amino-acid chain; its full sequence is Sorting nexin-14 (946 aa).

2 helical membrane passes run 24–44 and 49–69; these read ICRQYPLFCFLLLCLSAASLL and IHILMIFWSFVAGVVTFYCSL. The PXA domain maps to 130-304; sequence SSKVDASLSE…LLIIFIDDSP (175 aa). One can recognise an RGS domain in the interval 336 to 468; the sequence is ELKQIREQQD…CHSDEYFRQL (133 aa). Position 548 is a phosphoserine (Ser-548). Residues 570 to 690 enclose the PX domain; the sequence is PYVDFFEDPS…DFLSPNGGET (121 aa).

The protein belongs to the sorting nexin family. As to expression, widely expressed both in fetal and adult tissues.

The protein localises to the lysosome membrane. It localises to the late endosome membrane. It is found in the cell projection. The protein resides in the dendrite. In terms of biological role, plays a role in maintaining normal neuronal excitability and synaptic transmission. May be involved in several stages of intracellular trafficking. Required for autophagosome clearance, possibly by mediating the fusion of lysosomes with autophagosomes. Binds phosphatidylinositol 3,5-bisphosphate (PtdIns(3,5)P2), a key component of late endosomes/lysosomes. Does not bind phosphatidylinositol 3-phosphate (PtdIns(3P)). The polypeptide is Sorting nexin-14 (SNX14) (Homo sapiens (Human)).